The sequence spans 464 residues: Protein FAM90A15 (464 aa).

Disordered stretches follow at residues 1–42 (MMAR…DPRL), 70–389 (PATL…HDGA), and 415–437 (HSPE…SEAP). 2 stretches are compositionally biased toward basic and acidic residues: residues 74 to 89 (GKKE…KPRV) and 97 to 114 (NKDK…DPQR). Residues 180–197 (LASLSPLRKASLSSSSSL) are compositionally biased toward low complexity.

Belongs to the FAM90 family.

This is Protein FAM90A15 from Homo sapiens (Human).